Reading from the N-terminus, the 378-residue chain is Dual-specificity RNA methyltransferase RlmN 2 (378 aa).

Glu-113 functions as the Proton acceptor in the catalytic mechanism. The 237-residue stretch at 119–355 folds into the Radical SAM core domain; the sequence is TEDRRTLCVS…AAYIRRNRGR (237 aa). The cysteines at positions 126 and 361 are disulfide-linked. 3 residues coordinate [4Fe-4S] cluster: Cys-133, Cys-137, and Cys-140. S-adenosyl-L-methionine contacts are provided by residues 188 to 189, Ser-220, 242 to 244, and Asn-318; these read GE and SLN. Cys-361 serves as the catalytic S-methylcysteine intermediate.

Belongs to the radical SAM superfamily. RlmN family. [4Fe-4S] cluster is required as a cofactor.

It is found in the cytoplasm. The enzyme catalyses adenosine(2503) in 23S rRNA + 2 reduced [2Fe-2S]-[ferredoxin] + 2 S-adenosyl-L-methionine = 2-methyladenosine(2503) in 23S rRNA + 5'-deoxyadenosine + L-methionine + 2 oxidized [2Fe-2S]-[ferredoxin] + S-adenosyl-L-homocysteine. The catalysed reaction is adenosine(37) in tRNA + 2 reduced [2Fe-2S]-[ferredoxin] + 2 S-adenosyl-L-methionine = 2-methyladenosine(37) in tRNA + 5'-deoxyadenosine + L-methionine + 2 oxidized [2Fe-2S]-[ferredoxin] + S-adenosyl-L-homocysteine. Functionally, specifically methylates position 2 of adenine 2503 in 23S rRNA and position 2 of adenine 37 in tRNAs. m2A2503 modification seems to play a crucial role in the proofreading step occurring at the peptidyl transferase center and thus would serve to optimize ribosomal fidelity. The polypeptide is Dual-specificity RNA methyltransferase RlmN 2 (Myxococcus xanthus (strain DK1622)).